Consider the following 684-residue polypeptide: MENKNDMFNKTPKSGKPKMFRFNLYWMYGLIFIMLVALYMTNDSSGTKELGWTEFQKLAQENVFDKMTVYNKKNLVEATVKNGKTEQVFGNMDVSKIGVSPKVYVKIPSADKFSDFYDKAVADSHIDTQVRFEEGDDAIWNFLVSFGPIILLIGVWMFLMRRMSGGTGAGPGGVFSVGKAKAQLFDKDNDRKVTFKDVAGLAEAKQEVEEIVSFLKNPEKYTELGGKIPKGALLVGPPGTGKTLLAKAVAGEANVPFFSLSGSDFVEMFVGVGASRVRDLFRQAKEKSPCIVFIDEIDAVGRARGKNANMNSNDERENTLNQLLTEMDGFGSNSGVIILAATNRADILDKALLRAGRFDRQIHVELPDLNERKEIFGVHLRPIKIDESVDAEFLARQTPGFSGADIANVCNEAALIAARNGKKFVQKEDFMNAVDRIVGGLEKRSKITTEEERKCIANHEAGHATLSWLLEHANPLVKVTIVPRGKALGAAWYLPEERQITTREQLQDEMCATLGGRAAEELVLGKISTGASNDLERVTKQAYAMVVYFGMSDKLPNLNYYDSTGQDWGFTKPYSEETAKLIDTEVQKIINEQYDRAKRILSENKEGHSKLAQVLLDREVIYSEDVEHIFGKRAWISRSQEILELQEKANGKNKENADKEAEADATTENVTDTPTEENKTGKIA.

Over 1 to 21 the chain is Cytoplasmic; sequence MENKNDMFNKTPKSGKPKMFR. A helical transmembrane segment spans residues 22-42; it reads FNLYWMYGLIFIMLVALYMTN. Topologically, residues 43–138 are periplasmic; the sequence is DSSGTKELGW…QVRFEEGDDA (96 aa). Residues 139–159 traverse the membrane as a helical segment; it reads IWNFLVSFGPIILLIGVWMFL. The Cytoplasmic segment spans residues 160–684; that stretch reads MRRMSGGTGA…TEENKTGKIA (525 aa). 236-243 contributes to the ATP binding site; it reads GPPGTGKT. Residue His459 participates in Zn(2+) binding. Glu460 is an active-site residue. His463 and Asp534 together coordinate Zn(2+). Residues 647-662 show a composition bias toward basic and acidic residues; that stretch reads EKANGKNKENADKEAE. Residues 647–684 form a disordered region; sequence EKANGKNKENADKEAEADATTENVTDTPTEENKTGKIA.

This sequence in the central section; belongs to the AAA ATPase family. In the C-terminal section; belongs to the peptidase M41 family. As to quaternary structure, homohexamer. Zn(2+) serves as cofactor.

It is found in the cell inner membrane. Acts as a processive, ATP-dependent zinc metallopeptidase for both cytoplasmic and membrane proteins. Plays a role in the quality control of integral membrane proteins. The sequence is that of ATP-dependent zinc metalloprotease FtsH from Parabacteroides distasonis (strain ATCC 8503 / DSM 20701 / CIP 104284 / JCM 5825 / NCTC 11152).